The following is a 116-amino-acid chain: SPbeta prophage-derived uncharacterized protein YoqA (116 aa).

The polypeptide is SPbeta prophage-derived uncharacterized protein YoqA (yoqA) (Bacillus subtilis (strain 168)).